The chain runs to 101 residues: Small ribosomal subunit protein uS14 (101 aa).

Residues L48 to R69 are disordered. The segment covering L51–G68 has biased composition (basic and acidic residues).

Belongs to the universal ribosomal protein uS14 family. Part of the 30S ribosomal subunit. Contacts proteins S3 and S10.

Functionally, binds 16S rRNA, required for the assembly of 30S particles and may also be responsible for determining the conformation of the 16S rRNA at the A site. The sequence is that of Small ribosomal subunit protein uS14 from Stenotrophomonas maltophilia (strain R551-3).